A 275-amino-acid chain; its full sequence is Voltage-dependent calcium channel gamma-7 subunit (275 aa).

4 helical membrane-spanning segments follow: residues 8–28 (ALTL…GIAV), 103–123 (FPMV…IGHI), 129–149 (ILAF…VVGL), and 179–199 (FAFA…SVYL). Phosphoserine is present on residues S222, S225, and S273.

It belongs to the PMP-22/EMP/MP20 family. CACNG subfamily. As to quaternary structure, interacts with CACNA1C. Identified in a complex with the L-type calcium channel subunits CACNA1C, CACNA2D1 and either CACNB1 or CACNB2. Acts as an auxiliary subunit for AMPA-selective glutamate receptors (AMPARs), such as GRIA1 and GRIA2. Detected in heart left ventricle. Widely expressed.

It is found in the cell membrane. In terms of biological role, regulates the activity of L-type calcium channels that contain CACNA1C as pore-forming subunit. Regulates the trafficking and gating properties of AMPA-selective glutamate receptors (AMPARs). Promotes their targeting to the cell membrane and synapses and modulates their gating properties by slowing their rates of activation, deactivation and desensitization and by mediating their resensitization. Displays subunit-specific AMPA receptor regulation. Shows specificity only for GRIA1 and GRIA2. The protein is Voltage-dependent calcium channel gamma-7 subunit (CACNG7) of Homo sapiens (Human).